Here is a 284-residue protein sequence, read N- to C-terminus: NADH-cytochrome b5 reductase 1 (284 aa).

Residues 7 to 27 traverse the membrane as a helical segment; sequence KLVVVIVIVVVPLLFKFIIGP. The FAD-binding FR-type domain occupies 38–142; the sequence is NDFQSFPLVE…KGPRGNYHYE (105 aa). Position 148–180 (148–180) interacts with FAD; that stretch reads HLGMIAGGTGIAPMYQIMKAIAMDSHDTTKVSL.

This sequence belongs to the flavoprotein pyridine nucleotide cytochrome reductase family. As to quaternary structure, monomer. Component of the 2-(3-amino-3-carboxypropyl)histidine synthase complex composed of DPH1, DPH2, KTI11/DPH3 and a NADH-dependent reductase, predominantly CBR1. Interacts with KTI11/DPH3. Interacts with STE20. The cofactor is FAD.

Its subcellular location is the mitochondrion outer membrane. It catalyses the reaction 2 Fe(III)-[cytochrome b5] + NADH = 2 Fe(II)-[cytochrome b5] + NAD(+) + H(+). The enzyme catalyses 2 Fe(3+)-[Dph3] + NADH = 2 Fe(2+)-[Dph3] + NAD(+) + H(+). It functions in the pathway protein modification; peptidyl-diphthamide biosynthesis. With respect to regulation, competitively inhibited by NAD(+). Inhibited by mercurials such as p-chloromercuribenzoate (PCMB) and HgCl(2). Enzymatic activity increases under anaerobic conditions. In terms of biological role, NADH-dependent reductase for KTI11/DPH3 and cytochrome b5. Required for the first step of diphthamide biosynthesis, a post-translational modification of histidine which occurs in elongation factor 2. DPH1 and DPH2 transfer a 3-amino-3-carboxypropyl (ACP) group from S-adenosyl-L-methionine (SAM) to a histidine residue, the reaction is assisted by a reduction system comprising KTI11/DPH3 and a NADH-dependent reductase, predominantly CBR1. By reducing KTI11/DPH3, also involved in the formation of the tRNA wobble base modification mcm5s 2U (5-methoxycarbonylmethyl-2-thiouridine), mediated by the elongator complex. The cytochrome b5/NADH cytochrome b5 reductase electron transfer system supports the catalytic activity of several sterol biosynthetic enzymes. Plays a role in bud morphology. This Saccharomyces cerevisiae (strain YJM789) (Baker's yeast) protein is NADH-cytochrome b5 reductase 1 (CBR1).